A 417-amino-acid polypeptide reads, in one-letter code: Gamma-glutamyl phosphate reductase (417 aa).

Belongs to the gamma-glutamyl phosphate reductase family.

It localises to the cytoplasm. It catalyses the reaction L-glutamate 5-semialdehyde + phosphate + NADP(+) = L-glutamyl 5-phosphate + NADPH + H(+). It participates in amino-acid biosynthesis; L-proline biosynthesis; L-glutamate 5-semialdehyde from L-glutamate: step 2/2. Functionally, catalyzes the NADPH-dependent reduction of L-glutamate 5-phosphate into L-glutamate 5-semialdehyde and phosphate. The product spontaneously undergoes cyclization to form 1-pyrroline-5-carboxylate. This Escherichia coli O81 (strain ED1a) protein is Gamma-glutamyl phosphate reductase.